The chain runs to 620 residues: Dihydroxy-acid dehydratase (620 aa).

D82 provides a ligand contact to Mg(2+). A [2Fe-2S] cluster-binding site is contributed by C123. Mg(2+)-binding residues include D124 and K125. K125 carries the N6-carboxylysine modification. [2Fe-2S] cluster is bound at residue C197. A Mg(2+)-binding site is contributed by E493. S519 acts as the Proton acceptor in catalysis.

This sequence belongs to the IlvD/Edd family. Homodimer. Requires [2Fe-2S] cluster as cofactor. Mg(2+) serves as cofactor.

It catalyses the reaction (2R)-2,3-dihydroxy-3-methylbutanoate = 3-methyl-2-oxobutanoate + H2O. It carries out the reaction (2R,3R)-2,3-dihydroxy-3-methylpentanoate = (S)-3-methyl-2-oxopentanoate + H2O. The protein operates within amino-acid biosynthesis; L-isoleucine biosynthesis; L-isoleucine from 2-oxobutanoate: step 3/4. It functions in the pathway amino-acid biosynthesis; L-valine biosynthesis; L-valine from pyruvate: step 3/4. In terms of biological role, functions in the biosynthesis of branched-chain amino acids. Catalyzes the dehydration of (2R,3R)-2,3-dihydroxy-3-methylpentanoate (2,3-dihydroxy-3-methylvalerate) into 2-oxo-3-methylpentanoate (2-oxo-3-methylvalerate) and of (2R)-2,3-dihydroxy-3-methylbutanoate (2,3-dihydroxyisovalerate) into 2-oxo-3-methylbutanoate (2-oxoisovalerate), the penultimate precursor to L-isoleucine and L-valine, respectively. This chain is Dihydroxy-acid dehydratase, found in Bifidobacterium longum subsp. infantis (strain ATCC 15697 / DSM 20088 / JCM 1222 / NCTC 11817 / S12).